The primary structure comprises 59 residues: Sec-independent protein translocase protein TatA 1 (59 aa).

A helical transmembrane segment spans residues phenylalanine 3–serine 23.

Belongs to the TatA/E family. As to quaternary structure, forms a complex with TatC.

It is found in the cell inner membrane. Its function is as follows. Part of the twin-arginine translocation (Tat) system that transports large folded proteins containing a characteristic twin-arginine motif in their signal peptide across membranes. TatA could form the protein-conducting channel of the Tat system. The chain is Sec-independent protein translocase protein TatA 1 from Aquifex aeolicus (strain VF5).